Reading from the N-terminus, the 210-residue chain is Tetraspanin-31 (210 aa).

Residues 1–12 lie on the Cytoplasmic side of the membrane; that stretch reads MVCGGFACSKNA. The helical transmembrane segment at 13 to 33 threads the bilayer; that stretch reads LCALNVVYMLVGLLLIGVAAW. At 34 to 44 the chain is on the extracellular side; the sequence is AKGLGLVSSIH. Residues 45–65 traverse the membrane as a helical segment; the sequence is IIGGVIAVGVFLLLIAVAGLV. The Cytoplasmic segment spans residues 66–72; that stretch reads GAVNHHQ. Residues 73–93 traverse the membrane as a helical segment; that stretch reads VLLFFYMIILGLVFIFQFGIS. The Extracellular portion of the chain corresponds to 94 to 173; that stretch reads CSCLAINLSK…FLKHSDEALK (80 aa). Asn-100, Asn-109, Asn-117, and Asn-134 each carry an N-linked (GlcNAc...) asparagine glycan. The helical transmembrane segment at 174–194 threads the bilayer; the sequence is ILGGVGLFFSFTEILGVWLAM. Topologically, residues 195–210 are cytoplasmic; that stretch reads RFRNQKDPRANPSAFL.

The protein belongs to the tetraspanin (TM4SF) family.

Its subcellular location is the membrane. The chain is Tetraspanin-31 (TSPAN31) from Bos taurus (Bovine).